The chain runs to 561 residues: Probable galacturonosyltransferase 9 (561 aa).

Over 1 to 27 (MAVAFRGGRGGVGSGQSTGLRSFFSYR) the chain is Cytoplasmic. Residues 28 to 48 (IFISALFSFLFLATFSVVLNS) traverse the membrane as a helical; Signal-anchor for type II membrane protein segment. Residues 49–561 (SRHQPHQDHT…EFVQMCNFGL (513 aa)) lie on the Lumenal side of the membrane. 4 N-linked (GlcNAc...) asparagine glycosylation sites follow: Asn124, Asn320, Asn346, and Asn426.

The protein belongs to the glycosyltransferase 8 family. As to expression, expressed in roots, inflorescences, siliques, leaves and stems.

Its subcellular location is the golgi apparatus membrane. It participates in glycan metabolism; pectin biosynthesis. In terms of biological role, may be involved in pectin synthesis. The protein is Probable galacturonosyltransferase 9 (GAUT9) of Arabidopsis thaliana (Mouse-ear cress).